The following is a 270-amino-acid chain: Phosphatidylglycerol--prolipoprotein diacylglyceryl transferase (270 aa).

4 helical membrane-spanning segments follow: residues 19-39 (FPVY…LWLA), 56-76 (LVLI…VIFE), 92-112 (QGGL…ILFA), and 116-136 (GVSF…GQAI). Position 138 (arginine 138) interacts with a 1,2-diacyl-sn-glycero-3-phospho-(1'-sn-glycerol). 3 consecutive transmembrane segments (helical) span residues 178–198 (HPTF…LLAL), 206–226 (GELF…VEGL), and 236–256 (LRIA…FIIV).

It belongs to the Lgt family.

It is found in the cell membrane. It carries out the reaction L-cysteinyl-[prolipoprotein] + a 1,2-diacyl-sn-glycero-3-phospho-(1'-sn-glycerol) = an S-1,2-diacyl-sn-glyceryl-L-cysteinyl-[prolipoprotein] + sn-glycerol 1-phosphate + H(+). The protein operates within protein modification; lipoprotein biosynthesis (diacylglyceryl transfer). Functionally, catalyzes the transfer of the diacylglyceryl group from phosphatidylglycerol to the sulfhydryl group of the N-terminal cysteine of a prolipoprotein, the first step in the formation of mature lipoproteins. The polypeptide is Phosphatidylglycerol--prolipoprotein diacylglyceryl transferase (Bacillus anthracis (strain A0248)).